A 90-amino-acid polypeptide reads, in one-letter code: Caspase recruitment domain-containing protein 18 (90 aa).

The CARD domain maps to 1–90; the sequence is MADQLLRKKR…PQLASKMGLH (90 aa).

Interacts with pro-CASP1. Interacts with CARD8. In terms of tissue distribution, primarily expressed in the heart and placenta.

Functionally, inhibits generation of IL-1-beta by interacting with caspase-1 and preventing its association with RIP2. Down-regulates the release of IL1B. This Homo sapiens (Human) protein is Caspase recruitment domain-containing protein 18 (CARD18).